Reading from the N-terminus, the 232-residue chain is Ubiquinone biosynthesis O-methyltransferase (232 aa).

S-adenosyl-L-methionine is bound by residues Arg36, Gly55, Asp76, and Leu120.

It belongs to the methyltransferase superfamily. UbiG/COQ3 family.

The enzyme catalyses a 3-demethylubiquinol + S-adenosyl-L-methionine = a ubiquinol + S-adenosyl-L-homocysteine + H(+). It catalyses the reaction a 3-(all-trans-polyprenyl)benzene-1,2-diol + S-adenosyl-L-methionine = a 2-methoxy-6-(all-trans-polyprenyl)phenol + S-adenosyl-L-homocysteine + H(+). Its pathway is cofactor biosynthesis; ubiquinone biosynthesis. In terms of biological role, O-methyltransferase that catalyzes the 2 O-methylation steps in the ubiquinone biosynthetic pathway. This is Ubiquinone biosynthesis O-methyltransferase from Pseudomonas entomophila (strain L48).